Consider the following 580-residue polypeptide: Arginine--tRNA ligase (580 aa).

A 'HIGH' region motif is present at residues 123–133 (PNIAKEMHVGH).

Belongs to the class-I aminoacyl-tRNA synthetase family. In terms of assembly, monomer.

It is found in the cytoplasm. It catalyses the reaction tRNA(Arg) + L-arginine + ATP = L-arginyl-tRNA(Arg) + AMP + diphosphate. This Buchnera aphidicola subsp. Schizaphis graminum (strain Sg) protein is Arginine--tRNA ligase (argS).